The chain runs to 143 residues: Transcriptional regulator SlyA (143 aa).

Positions 2–135 (ESTLGSDLAR…LANLIERLEQ (134 aa)) constitute an HTH marR-type domain. Residues 49 to 72 (QIQLAKAIGIEQPSLVRTLDQLED) constitute a DNA-binding region (H-T-H motif).

It belongs to the SlyA family. In terms of assembly, homodimer.

Functionally, transcription regulator that can specifically activate or repress expression of target genes. The polypeptide is Transcriptional regulator SlyA (Edwardsiella ictaluri (strain 93-146)).